The primary structure comprises 340 residues: Large ribosomal subunit protein uL29m (340 aa).

Polar residues predominate over residues 1–10 (MIRSLHTSAV). Residues 1–22 (MIRSLHTSAVRQGRKKWPKPLP) form a disordered region.

It belongs to the universal ribosomal protein uL29 family. Component of the mitochondrial large ribosomal subunit. Mature mitochondrial ribosomes consist of a small (37S) and a large (54S) subunit. The 37S subunit contains at least 33 different proteins and 1 molecule of RNA (15S). The 54S subunit contains at least 45 different proteins and 1 molecule of RNA (21S).

The protein localises to the mitochondrion. The protein is Large ribosomal subunit protein uL29m (MRPL4) of Yarrowia lipolytica (strain CLIB 122 / E 150) (Yeast).